Consider the following 334-residue polypeptide: Chemotactic signal transduction system substrate-binding protein CosB (334 aa).

The N-terminal stretch at 1-29 (MMDTPEHASTSSRRQLLGMLAAGGTTAVA) is a signal peptide.

Belongs to the OsmX family.

The protein localises to the cell membrane. Mediates chemotaxis towards compatible osmolytes. May function as a receptor that binds the osmolytes and transduces a signal to CosT. Has probably no additional role in transport. In Halobacterium salinarum (strain ATCC 29341 / DSM 671 / R1), this protein is Chemotactic signal transduction system substrate-binding protein CosB (cosB).